The sequence spans 591 residues: V-type ATP synthase alpha chain (591 aa).

Position 233-240 (233-240 (GPFGAGKT)) interacts with ATP.

It belongs to the ATPase alpha/beta chains family.

It carries out the reaction ATP + H2O + 4 H(+)(in) = ADP + phosphate + 5 H(+)(out). Its function is as follows. Produces ATP from ADP in the presence of a proton gradient across the membrane. The V-type alpha chain is a catalytic subunit. The sequence is that of V-type ATP synthase alpha chain from Streptococcus pneumoniae serotype 19F (strain G54).